We begin with the raw amino-acid sequence, 353 residues long: Guanine nucleotide-binding protein alpha-1 subunit (353 aa).

A lipid anchor (N-myristoyl glycine) is attached at G2. C3 carries S-palmitoyl cysteine lipidation. The 322-residue stretch at N32–L353 folds into the G-alpha domain. The interval K35–T48 is G1 motif. GTP-binding residues include E43, S44, G45, K46, S47, T48, D150, L175, T181, G203, N269, K270, D272, and A325. S47 provides a ligand contact to Mg(2+). The tract at residues D173–T181 is G2 motif. T181 contacts Mg(2+). Positions Y196–R205 are G3 motif. The segment at I265–D272 is G4 motif. A G5 motif region spans residues T323 to T328.

The protein belongs to the G-alpha family. G proteins are composed of 3 units; alpha, beta and gamma. The alpha chain contains the guanine nucleotide binding site. Mg(2+) is required as a cofactor.

Its function is as follows. Guanine nucleotide-binding proteins (G proteins) are involved as modulators or transducers in various transmembrane signaling systems. The protein is Guanine nucleotide-binding protein alpha-1 subunit (GPA1) of Mycosarcoma maydis (Corn smut fungus).